Reading from the N-terminus, the 145-residue chain is UPF0179 protein TV1250 (145 aa).

Belongs to the UPF0179 family.

The chain is UPF0179 protein TV1250 from Thermoplasma volcanium (strain ATCC 51530 / DSM 4299 / JCM 9571 / NBRC 15438 / GSS1).